A 269-amino-acid polypeptide reads, in one-letter code: Cytochrome c oxidase subunit 3 (269 aa).

A run of 7 helical transmembrane segments spans residues 24-44, 46-66, 90-110, 132-152, 167-187, 207-227, and 247-267; these read FYNSLSLFILTTSGVLTMHGF, NMYIILFIAFINLVWCMTLWF, GVGLFIASEALFFLAIFWTFF, IDPFELPLLNNIILLSSGVTV, ALYGLVATILLAIVFTIFQGI, FSTGFHGFHVLIGTAFLSVGL, and ILYWHFVDVVWLILYVCIYFW.

It belongs to the cytochrome c oxidase subunit 3 family. Component of the cytochrome c oxidase (complex IV, CIV), a multisubunit enzyme composed of a catalytic core of 3 subunits and several supernumerary subunits. The complex exists as a monomer or a dimer and forms supercomplexes (SCs) in the inner mitochondrial membrane with ubiquinol-cytochrome c oxidoreductase (cytochrome b-c1 complex, complex III, CIII).

Its subcellular location is the mitochondrion inner membrane. The catalysed reaction is 4 Fe(II)-[cytochrome c] + O2 + 8 H(+)(in) = 4 Fe(III)-[cytochrome c] + 2 H2O + 4 H(+)(out). Its function is as follows. Component of the cytochrome c oxidase, the last enzyme in the mitochondrial electron transport chain which drives oxidative phosphorylation. The respiratory chain contains 3 multisubunit complexes succinate dehydrogenase (complex II, CII), ubiquinol-cytochrome c oxidoreductase (cytochrome b-c1 complex, complex III, CIII) and cytochrome c oxidase (complex IV, CIV), that cooperate to transfer electrons derived from NADH and succinate to molecular oxygen, creating an electrochemical gradient over the inner membrane that drives transmembrane transport and the ATP synthase. Cytochrome c oxidase is the component of the respiratory chain that catalyzes the reduction of oxygen to water. Electrons originating from reduced cytochrome c in the intermembrane space (IMS) are transferred via the dinuclear copper A center (CU(A)) of subunit 2 and heme A of subunit 1 to the active site in subunit 1, a binuclear center (BNC) formed by heme A3 and copper B (CU(B)). The BNC reduces molecular oxygen to 2 water molecules using 4 electrons from cytochrome c in the IMS and 4 protons from the mitochondrial matrix. In Trichophyton rubrum (Athlete's foot fungus), this protein is Cytochrome c oxidase subunit 3 (COXIII).